A 977-amino-acid chain; its full sequence is Monofunctional C1-tetrahydrofolate synthase, mitochondrial (977 aa).

The N-terminal 31 residues, 1–31 (MSVRLPLLLRQLGRQQLPSGPACRLRELCRS), are a transit peptide targeting the mitochondrion. Residues 29 to 71 (CRSGSRSSSSGGGDPEGLRGRRLQDGQTFSSHGPGNPEAPGMD) form a disordered region. The methylenetetrahydrofolate dehydrogenase and cyclohydrolase stretch occupies residues 32–347 (GSRSSSSGGG…REQQHRRWRL (316 aa)). Residue lysine 188 is modified to N6-acetyllysine; alternate. Lysine 188 bears the N6-succinyllysine; alternate mark. The interval 348-977 (HCLKLQPLSP…TETEQVKGLF (630 aa)) is formyltetrahydrofolate synthetase. A Phosphoserine modification is found at serine 356. 422 to 429 (TPLGEGKS) serves as a coordination point for ATP. N6-succinyllysine is present on lysine 595.

It in the N-terminal section; belongs to the tetrahydrofolate dehydrogenase/cyclohydrolase family. The protein in the C-terminal section; belongs to the formate--tetrahydrofolate ligase family. In terms of assembly, homodimer.

The protein resides in the mitochondrion. It catalyses the reaction (6S)-5,6,7,8-tetrahydrofolate + formate + ATP = (6R)-10-formyltetrahydrofolate + ADP + phosphate. It participates in one-carbon metabolism; tetrahydrofolate interconversion. May provide the missing metabolic reaction required to link the mitochondria and the cytoplasm in the mammalian model of one-carbon folate metabolism complementing thus the enzymatic activities of MTHFD2. The sequence is that of Monofunctional C1-tetrahydrofolate synthase, mitochondrial (Mthfd1l) from Mus musculus (Mouse).